We begin with the raw amino-acid sequence, 262 residues long: Aconitate isomerase (262 aa).

The N-terminal stretch at 1–22 is a signal peptide; it reads MFPRLPTLALGALLLASTPLLA.

In terms of assembly, monomer.

The enzyme catalyses trans-aconitate = cis-aconitate. With respect to regulation, activated more than 1.5 fold by Ca(2+), Mg(2+), Mn(2+), Ni(2+), Fe(2+), DDT and 1,10-phenanthroline. Strongly inhibited by Ag(+) and Hg(+). Inhibited by addition of 20% (v/v) glycerol. No effect by addition of NADH or NADPH. Its function is as follows. Involved in assimilation of trans-aconitic acid. Preference for cis-aconitic acid is 14-fold higher than for trans-aconitic acid. Not active on intermediates of tricarboxylic acid (TCA) cycle including citric acid, succinic acid, fumaric acid, and 2-oxoglutaric acid or on other dicarboxilic acids including itaconic acid, formic acid, citraconic acid or maleic acid. The polypeptide is Aconitate isomerase (Pseudomonas sp).